A 313-amino-acid chain; its full sequence is Ribonuclease Z (313 aa).

The Zn(2+) site is built by His63, His65, Asp67, His68, His142, Asp212, and His270. Catalysis depends on Asp67, which acts as the Proton acceptor.

The protein belongs to the RNase Z family. As to quaternary structure, homodimer. It depends on Zn(2+) as a cofactor.

It carries out the reaction Endonucleolytic cleavage of RNA, removing extra 3' nucleotides from tRNA precursor, generating 3' termini of tRNAs. A 3'-hydroxy group is left at the tRNA terminus and a 5'-phosphoryl group is left at the trailer molecule.. Zinc phosphodiesterase, which displays some tRNA 3'-processing endonuclease activity. Probably involved in tRNA maturation, by removing a 3'-trailer from precursor tRNA. This chain is Ribonuclease Z, found in Enterococcus faecalis (strain ATCC 700802 / V583).